The sequence spans 482 residues: Ubiquitin carboxyl-terminal hydrolase 6 (482 aa).

Residues 2-77 form the Ubiquitin-like domain; the sequence is PTVSVKWQKK…LMMMGTADEI (76 aa). The 375-residue stretch at 104–478 folds into the USP domain; the sequence is AGLVNLGNTC…MAYITMYKAR (375 aa). Catalysis depends on Cys113, which acts as the Nucleophile. The segment at 172–191 is calmodulin-binding; that stretch reads SQFWMVLRKKYPQFSQLQNG. Basic and acidic residues-rich tracts occupy residues 350–361 and 371–381; these read PRQKLREEEGKK and GSKDSDVKMTD. The segment at 350–407 is disordered; sequence PRQKLREEEGKKLGLQTSAKSGSKDSDVKMTDAEASANGSGESSTVNPQEGTSSEKET. Low complexity predominate over residues 382–393; the sequence is AEASANGSGESS. His430 acts as the Proton acceptor in catalysis.

The protein belongs to the peptidase C19 family. Interacts with calmodulin (CaM).

The enzyme catalyses Thiol-dependent hydrolysis of ester, thioester, amide, peptide and isopeptide bonds formed by the C-terminal Gly of ubiquitin (a 76-residue protein attached to proteins as an intracellular targeting signal).. In terms of biological role, recognizes and hydrolyzes the peptide bond at the C-terminal Gly of ubiquitin. Involved in the processing of poly-ubiquitin precursors as well as that of ubiquitinated proteins. This is Ubiquitin carboxyl-terminal hydrolase 6 (UBP6) from Arabidopsis thaliana (Mouse-ear cress).